The following is a 124-amino-acid chain: UPF0102 protein Msil_0293 (124 aa).

Belongs to the UPF0102 family.

This Methylocella silvestris (strain DSM 15510 / CIP 108128 / LMG 27833 / NCIMB 13906 / BL2) protein is UPF0102 protein Msil_0293.